Consider the following 122-residue polypeptide: Methylglyoxal synthase (122 aa).

The MGS-like domain occupies Met-1–Lys-122. Substrate contacts are provided by residues His-8, Lys-12, Thr-34–Thr-37, and Ser-54–Gly-55. Asp-60 acts as the Proton donor/acceptor in catalysis. His-87 is a substrate binding site.

The protein belongs to the methylglyoxal synthase family.

The catalysed reaction is dihydroxyacetone phosphate = methylglyoxal + phosphate. Its function is as follows. Catalyzes the formation of methylglyoxal from dihydroxyacetone phosphate. This Acholeplasma laidlawii (strain PG-8A) protein is Methylglyoxal synthase.